The primary structure comprises 384 residues: Probable E3 ubiquitin-protein ligase rnf113 (384 aa).

Residues Met-1–Asn-11 are compositionally biased toward basic residues. The segment at Met-1–Ala-96 is disordered. Positions Pro-42–Ala-52 are enriched in polar residues. Residues Ser-60–Gln-71 are compositionally biased toward acidic residues. A C3H1-type zinc finger spans residues Asp-175–Ser-203. An RING-type zinc finger spans residues Cys-241–Gln-279. A disordered region spans residues Lys-299 to Asp-384. 2 stretches are compositionally biased toward basic and acidic residues: residues Gln-303 to Glu-312 and Glu-320 to Glu-334. A compositionally biased stretch (acidic residues) spans Glu-351–Asp-384.

It carries out the reaction S-ubiquitinyl-[E2 ubiquitin-conjugating enzyme]-L-cysteine + [acceptor protein]-L-lysine = [E2 ubiquitin-conjugating enzyme]-L-cysteine + N(6)-ubiquitinyl-[acceptor protein]-L-lysine.. It participates in protein modification; protein ubiquitination. In terms of biological role, may function as E3 ubiquitin-protein ligase that catalyzes the transfer of ubiquitin onto target proteins. May play a role in DNA repair via its role in the synthesis of 'Lys-63'-linked polyubiquitin chains that recruit proteins involved in repair to sites of DNA damage by alkylating agents. In Caenorhabditis elegans, this protein is Probable E3 ubiquitin-protein ligase rnf113 (rnf-113).